A 603-amino-acid polypeptide reads, in one-letter code: Prosaposin receptor GPR37 (603 aa).

The N-terminal stretch at 1–26 (MPAPGAPLSRTSRLLLLLLFKVSVSA) is a signal peptide. Over 27 to 255 (ALSFVPEPRN…QESYGAYAVM (229 aa)) the chain is Extracellular. N36 carries N-linked (GlcNAc...) asparagine glycosylation. The interval 39–232 (CLGESCSPLI…GGPRRGNSTN (194 aa)) is disordered. Composition is skewed to basic and acidic residues over residues 51 to 79 (RSRD…EAEV), 145 to 158 (TSER…RDEI), and 165 to 175 (HSVKTEPEPRD). Residues N212 and N229 are each glycosylated (N-linked (GlcNAc...) asparagine). The chain crosses the membrane as a helical span at residues 256–276 (CLSVVIFGTGIIGNLAVMCIV). The Cytoplasmic portion of the chain corresponds to 277–289 (CHNYYMRSISNSL). Residues 290-310 (LANLAFWDFLIIFFCLPLVIF) traverse the membrane as a helical segment. Over 311 to 325 (HELTKKWLLEDFSCK) the chain is Extracellular. A disulfide bridge links C324 with C409. Residues 326–346 (IVPYIEVASLGVTTFTLCALC) form a helical membrane-spanning segment. The Cytoplasmic portion of the chain corresponds to 347–369 (IDRFRAATNVQMYYEMIENCSST). The chain crosses the membrane as a helical span at residues 370 to 390 (TAKLAVIWVGALLLALPEVVL). Residues 391–433 (RQLSKEDLGFSGQAPAERCVIKISPDLPDTIYVLALTYDGARL) are Extracellular-facing. Residues 434 to 454 (WWYFGCYFCLPTLFTITCSLV) form a helical membrane-spanning segment. Topologically, residues 455 to 483 (TARKIRKAEKASTRGNKRQIHLESQMNCT) are cytoplasmic. A helical membrane pass occupies residues 484–504 (VVALTILYGFCIIPENICNIV). The Extracellular segment spans residues 505–521 (TAYMATGVSQQTMDLLN). Residues 522–542 (IISQFLLFFKSCVTPVLLFCL) form a helical membrane-spanning segment. The Cytoplasmic segment spans residues 543–603 (CRPFSRAFME…STFASVGTHC (61 aa)).

It belongs to the G-protein coupled receptor 1 family. Forms a complex with PRKN, STUB1 and HSP70. The amount of STUB1 in the complex increases during ER stress. STUB1 promotes the dissociation of HSP70 from PRKN, thus facilitating PRKN-mediated GPR37 ubiquitination. Interacts with PACRG. Post-translationally, the N-terminus is cleaved by ADAM10 metalloproteinase; mediating limited proteolysis leading to the release of receptor ectodomain by shedding. In addition, cleaved by FURIN between Arg-53 and Asp-54. In terms of processing, ubiquitinated by PRKN in the presence of UBE2E1 and UBE2L3 in the endoplasmic reticulum. The unfolded form is specifically ubiquitinated by SYVN1, which promotes its proteasomal degradation and prevents neuronal cell death. In terms of tissue distribution, highly expressed in the brain. High levels of expression were seen in fiber tracts such as the corpus callosum, anterior commissure, fornix, internal capsule, cerebral peduncles, and stria terminalis. Additionally, moderate levels of expression were seen in the pyramidal tracts and cerebellar peduncles, as well as in the spinal tract of the trigeminal nerve and the spinal fasciculi.

The protein resides in the cell projection. The protein localises to the dendrite. Its subcellular location is the synapse. It is found in the cell membrane. It localises to the endoplasmic reticulum membrane. Its function is as follows. G-protein-coupled receptor that plays a role in several physiological pathways such as resolution of inflammatory pain and oligodendrocyte differentiation. Acts as a receptor for several ligands including prosaposin, osteocalcin or neuroprotectin D1. Ligand binding induces endocytosis, followed by an ERK phosphorylation cascade. Acts as a receptor for osteocalcin (OCN) to regulate oligodendrocyte differentiation and central nervous system myelination. Mechanistically, plays a negative role in oligodendrocyte differentiation and myelination during development via activation of the ERK1/2 signaling pathway. Therefore, regulates the stability of myelin or resistance of myelin itself to demyelination. Upon activation by neuroprotectin D1 (NPD1), promotes the activation of phagocytosis in macrophages as well as the shift in cytokine release toward an anti-inflammatory profile, and thus helps to reverse inflammatory pain. In addition, the increased macrophage phagocytosis mediates protection against sepsis upon pathogen infection. Additionally, extracellular vesicles derived from efferocyte express prosaposin, which binds to macrophage GPR37 to increase expression of the efferocytosis receptor TIM4 via an ERK-AP1-dependent signaling axis, leading to increased macrophage efferocytosis efficiency and accelerated resolution of inflammation. May also act as a maturation factor of LRP6, protecting LRP6 from the endoplasmic reticulum (ER)-associated protein degradation (ERAD) and thereby promoting the Wnt/beta-catenin signaling pathway. The chain is Prosaposin receptor GPR37 (Gpr37) from Rattus norvegicus (Rat).